We begin with the raw amino-acid sequence, 104 residues long: L-rhamnose mutarotase (104 aa).

Tyr18 is a binding site for substrate. The Proton donor role is filled by His22. Residues Tyr41 and 76-77 each bind substrate; that span reads WW.

This sequence belongs to the rhamnose mutarotase family. Homodimer.

Its subcellular location is the cytoplasm. It catalyses the reaction alpha-L-rhamnose = beta-L-rhamnose. It participates in carbohydrate metabolism; L-rhamnose metabolism. In terms of biological role, involved in the anomeric conversion of L-rhamnose. In Opitutus terrae (strain DSM 11246 / JCM 15787 / PB90-1), this protein is L-rhamnose mutarotase.